Reading from the N-terminus, the 308-residue chain is Methionyl-tRNA formyltransferase (308 aa).

109–112 (SLLP) contacts (6S)-5,6,7,8-tetrahydrofolate.

The protein belongs to the Fmt family.

The catalysed reaction is L-methionyl-tRNA(fMet) + (6R)-10-formyltetrahydrofolate = N-formyl-L-methionyl-tRNA(fMet) + (6S)-5,6,7,8-tetrahydrofolate + H(+). Attaches a formyl group to the free amino group of methionyl-tRNA(fMet). The formyl group appears to play a dual role in the initiator identity of N-formylmethionyl-tRNA by promoting its recognition by IF2 and preventing the misappropriation of this tRNA by the elongation apparatus. In Salinispora tropica (strain ATCC BAA-916 / DSM 44818 / JCM 13857 / NBRC 105044 / CNB-440), this protein is Methionyl-tRNA formyltransferase.